Here is a 90-residue protein sequence, read N- to C-terminus: RNA-binding protein Hfq (90 aa).

A Sm domain is found at 9–69 (DRFLNHLRVN…ISTIIPSSYV (61 aa)).

The protein belongs to the Hfq family. Homohexamer.

RNA chaperone that binds small regulatory RNA (sRNAs) and mRNAs to facilitate mRNA translational regulation in response to envelope stress, environmental stress and changes in metabolite concentrations. Also binds with high specificity to tRNAs. The sequence is that of RNA-binding protein Hfq from Thermotoga petrophila (strain ATCC BAA-488 / DSM 13995 / JCM 10881 / RKU-1).